Reading from the N-terminus, the 193-residue chain is Potassium-transporting ATPase KdpC subunit (193 aa).

A helical membrane pass occupies residues 14–34; that stretch reads ITFTFLVLCGLVYPLIVTGIA.

It belongs to the KdpC family. As to quaternary structure, the system is composed of three essential subunits: KdpA, KdpB and KdpC.

The protein localises to the cell membrane. In terms of biological role, part of the high-affinity ATP-driven potassium transport (or Kdp) system, which catalyzes the hydrolysis of ATP coupled with the electrogenic transport of potassium into the cytoplasm. This subunit acts as a catalytic chaperone that increases the ATP-binding affinity of the ATP-hydrolyzing subunit KdpB by the formation of a transient KdpB/KdpC/ATP ternary complex. This is Potassium-transporting ATPase KdpC subunit from Bacillus mycoides (strain KBAB4) (Bacillus weihenstephanensis).